Reading from the N-terminus, the 474-residue chain is Cysteine--tRNA ligase (474 aa).

Position 29 (cysteine 29) interacts with Zn(2+). The short motif at 31-41 (ATVQGEPHVGH) is the 'HIGH' region element. Positions 211, 236, and 240 each coordinate Zn(2+). Positions 267-271 (KMSKS) match the 'KMSKS' region motif. Lysine 270 provides a ligand contact to ATP.

Belongs to the class-I aminoacyl-tRNA synthetase family. Monomer. It depends on Zn(2+) as a cofactor.

It localises to the cytoplasm. The catalysed reaction is tRNA(Cys) + L-cysteine + ATP = L-cysteinyl-tRNA(Cys) + AMP + diphosphate. This is Cysteine--tRNA ligase from Beutenbergia cavernae (strain ATCC BAA-8 / DSM 12333 / CCUG 43141 / JCM 11478 / NBRC 16432 / NCIMB 13614 / HKI 0122).